The primary structure comprises 124 residues: MAEIAAELVAVEKALWSGTATAVIAETTEGEIGVLPGHEPLLGQLVENGVVIIRTTEGEKLVAAVQGGFLSVSSKKITVLADSAVWADEVDQADAEARVREASSEEEKSRAESELRAVKRSKEK.

Positions 97 to 124 (ARVREASSEEEKSRAESELRAVKRSKEK) are disordered.

Belongs to the ATPase epsilon chain family. As to quaternary structure, F-type ATPases have 2 components, CF(1) - the catalytic core - and CF(0) - the membrane proton channel. CF(1) has five subunits: alpha(3), beta(3), gamma(1), delta(1), epsilon(1). CF(0) has three main subunits: a, b and c.

The protein localises to the cell membrane. In terms of biological role, produces ATP from ADP in the presence of a proton gradient across the membrane. The chain is ATP synthase epsilon chain from Corynebacterium urealyticum (strain ATCC 43042 / DSM 7109).